Here is a 412-residue protein sequence, read N- to C-terminus: Peptidase T (412 aa).

A Zn(2+)-binding site is contributed by His84. Residue Asp86 is part of the active site. Residue Asp146 coordinates Zn(2+). The Proton acceptor role is filled by Glu179. Zn(2+)-binding residues include Glu180, Asp202, and His385.

The protein belongs to the peptidase M20B family. The cofactor is Zn(2+).

It localises to the cytoplasm. It catalyses the reaction Release of the N-terminal residue from a tripeptide.. In terms of biological role, cleaves the N-terminal amino acid of tripeptides. The protein is Peptidase T of Haemophilus influenzae (strain PittGG).